A 69-amino-acid chain; its full sequence is Pantinin-1 (69 aa).

Residues 1-23 form the signal peptide; it reads MKTQFVILMITVILMQMLVQTEG. A Valine amide modification is found at Val-37. Residues 41–69 constitute a propeptide that is removed on maturation; sequence GLNDRDQLDDLFDSDLSDADIKLLKEMFK.

The protein belongs to the non-disulfide-bridged peptide (NDBP) superfamily. Short antimicrobial peptide (group 4) family. Expressed by the venom gland.

The protein resides in the secreted. The protein localises to the target cell membrane. In terms of biological role, amphipathic peptide that possesses relatively strong activities against Gram-positive bacteria and a fungus, but has very weak antimicrobial activities against Gram-negative bacteria. Also exhibits very low hemolytic activities against human erythrocytes (64 uM induce 21% of hemolysis). Minimal inhibitory concentration (MIC) are the following: 8 uM against S.aureus, 32 uM against B.magaterium, 32 uM against M.luteus, 28 uM against vancomycin-resistant Enterococci, 14 uM against methicillin-resistant S.aureus, 62 uM against E.coli, &gt;87 uM against P.putida, &gt;87 uM against K.oxytoca, 76 uM against E.cloacae, 72 uM against S.enterica and 16 uM against the fungus C.tropicalis. The protein is Pantinin-1 of Pandinus imperator (Emperor scorpion).